The chain runs to 662 residues: MIVSPCCRIIRTCCVSNRGTFHSRLAALYPSYIKIPNNHARIFVTKSRKINRPSSSFIIDTKEARQRNSDSSTVSSDLDEILKDQTPSAQLRLVDAYRRGFQSSTDSGKSSNKMQMWRTIIIKTILFGVVSCFTIVFLKKTLVGTFPKFLDQNIGSFAENTDVSFSDVQGCDEVKKELVDVVEFLRNPEKFNQIGAKLPKGVLLVGPPGVGKTLLAKAVSGEAQVPFLYASGSSFDEVLVGLGASRIRQLFTTAKQNSPCLVFIDEIDSVGGNRTFSPHHPFANQTINQLLAEMDGFQSKEGIIVLGATNQAEVLDKALLRPGRFDVQIHVSPPTYEGRIALLNLYLKKVKTGSNIDIEKLAHGTVGYTGADIQNLVNQAAIAAALRNDPFVEMHHLWDARDRLIMGPAKRRPLDDQTNRVSAFHEAGHALVALLTADSIPLHKVTIIPRGEAGGLTSFLQEKDISFMTRAQLLAQLDVLMGGRVGEELVFGADKVTNGAADDFRKATILAQNMVKRFGFSSKIGPRVIPDTQDEQLGEATRDLIDKEVDQLLNDSLTRVRTLLSSQSKQHKLLAEALLHFETLTKDEVLAVLAGKMKPPKTQSVTSKSTTLLPQLGPSTSTEIPRMIVSLIIVHVVDFISFFCPFKDTLHTYTHTHKLLFS.

Residue 206 to 213 (GPPGVGKT) coordinates ATP. Residue His-425 participates in Zn(2+) binding. The active site involves Glu-426. Zn(2+)-binding residues include His-429 and Asp-503.

It in the N-terminal section; belongs to the AAA ATPase family. In the C-terminal section; belongs to the peptidase M41 family. Zn(2+) is required as a cofactor.

Functionally, putative ATP-dependent protease. In Schistosoma mansoni (Blood fluke), this protein is ATP-dependent zinc metalloprotease YME1 homolog.